The sequence spans 121 residues: MGTTIHEETSAAQPPLNFTDGAASKVKELIEEEDNQALKLRVFVSGGGCSGFQYGFTFDEIVNEDDFVMEKQGVKLLVDSMSFQYLVGAEIDYQESAQGAQFVIKNPSAASTCGCGSSFSV.

Positions 49, 113, and 115 each coordinate iron-sulfur cluster.

It belongs to the HesB/IscA family. As to quaternary structure, homodimer. Iron-sulfur cluster is required as a cofactor.

Functionally, required for insertion of 4Fe-4S clusters. The chain is Putative iron-sulfur cluster insertion protein ErpA from Nitrosomonas europaea (strain ATCC 19718 / CIP 103999 / KCTC 2705 / NBRC 14298).